Consider the following 105-residue polypeptide: N(4)-acetylcytidine amidohydrolase (105 aa).

In terms of domain architecture, ASCH spans 8 to 93 (TFFEFLTPLV…ALIQEIYPNI (86 aa)). K22 functions as the Proton acceptor in the catalytic mechanism. T25 (nucleophile) is an active-site residue. E75 (proton donor) is an active-site residue.

The protein belongs to the N(4)-acetylcytidine amidohydrolase family.

It carries out the reaction N(4)-acetylcytidine + H2O = cytidine + acetate + H(+). The enzyme catalyses N(4)-acetyl-2'-deoxycytidine + H2O = 2'-deoxycytidine + acetate + H(+). The catalysed reaction is N(4)-acetylcytosine + H2O = cytosine + acetate + H(+). In terms of biological role, catalyzes the hydrolysis of N(4)-acetylcytidine (ac4C). The chain is N(4)-acetylcytidine amidohydrolase from Vibrio cholerae serotype O1 (strain ATCC 39315 / El Tor Inaba N16961).